The sequence spans 529 residues: Cytochrome P450 monooxygenase oblE (529 aa).

A helical transmembrane segment spans residues 38-58; it reads WQYIVTLLIAIITYDQVMYIW. Residue Cys-477 participates in heme binding.

Belongs to the cytochrome P450 family. It depends on heme as a cofactor.

It is found in the membrane. It participates in secondary metabolite biosynthesis; terpenoid biosynthesis. In terms of biological role, cytochrome P450 monooxygenase; part of the gene cluster that mediates the biosynthesis of the sesterterpenes ophiobolins, fungal phytotoxins with potential anti-cancer activities. The first step of the pathway is performed by the sesterterpene synthase oblA that possesses both prenyl transferase and terpene cyclase activity, converting isopentenyl diphosphate and dimethylallyl diphosphate into geranylfarnesyl diphosphate (GFPP) and further converting GFPP into ophiobolin F, respectively. Other sesterterpenoids (C(25) terpenoids) are found as minor products of oblA. The cytochrome P450 monooxygenase oblB then catalyzes a four-step oxidative transformation of ophiobolin F to yield ophiobolin C. The function of the cytochrome P450 monooxygenase oblE has still to be determined. This chain is Cytochrome P450 monooxygenase oblE, found in Emericella variicolor (Aspergillus stellatus).